We begin with the raw amino-acid sequence, 202 residues long: N-(5'-phosphoribosyl)anthranilate isomerase (202 aa).

Belongs to the TrpF family.

The enzyme catalyses N-(5-phospho-beta-D-ribosyl)anthranilate = 1-(2-carboxyphenylamino)-1-deoxy-D-ribulose 5-phosphate. Its pathway is amino-acid biosynthesis; L-tryptophan biosynthesis; L-tryptophan from chorismate: step 3/5. The chain is N-(5'-phosphoribosyl)anthranilate isomerase from Listeria monocytogenes serotype 4a (strain HCC23).